The chain runs to 59 residues: Small ribosomal subunit protein bS21A (59 aa).

The protein belongs to the bacterial ribosomal protein bS21 family.

This chain is Small ribosomal subunit protein bS21A, found in Gloeobacter violaceus (strain ATCC 29082 / PCC 7421).